Here is a 342-residue protein sequence, read N- to C-terminus: MSAFTPASEVLLRHSDDFEQSRILFAGDLQDDLPARFECAASRAHTQQFHHWQALSRQMCDNVRFSLVAQASDVADCDTLIYYWPKNKPEAQFQLMNILSLMPSGVDVFVVGENRSGVRSAEPMLADYAPLNKVDSARRCGLYHGRLEKQPQFSLESWWAEYSIDGLTIKTLPGVFSRDGLDVGSQLLLSTLTPHTKGKVLDVGCGAGVLSAALASHSPKVRLTLCDVSAPAVEASRATLAANGLEGEVFASNVFSEVKGRFDMIISNPPFHDGMQTSLDAAQTLIRGAVRHLNSGGELRIVANAFLPYPKILDETFGFHEVIAQTGRFKVYRTVMTRQAKK.

The protein belongs to the methyltransferase superfamily. RsmC family. As to quaternary structure, monomer.

The protein localises to the cytoplasm. The enzyme catalyses guanosine(1207) in 16S rRNA + S-adenosyl-L-methionine = N(2)-methylguanosine(1207) in 16S rRNA + S-adenosyl-L-homocysteine + H(+). In terms of biological role, specifically methylates the guanine in position 1207 of 16S rRNA in the 30S particle. The sequence is that of Ribosomal RNA small subunit methyltransferase C from Salmonella paratyphi B (strain ATCC BAA-1250 / SPB7).